The primary structure comprises 647 residues: uncharacterized protein (647 aa).

This is an uncharacterized protein from Cryphonectria parasitica mycoreovirus 1 (strain 9B21) (CpMYRV-1).